The primary structure comprises 556 residues: Formate--tetrahydrofolate ligase (556 aa).

65 to 72 serves as a coordination point for ATP; that stretch reads TPAGEGKT.

Belongs to the formate--tetrahydrofolate ligase family.

The catalysed reaction is (6S)-5,6,7,8-tetrahydrofolate + formate + ATP = (6R)-10-formyltetrahydrofolate + ADP + phosphate. It participates in one-carbon metabolism; tetrahydrofolate interconversion. The sequence is that of Formate--tetrahydrofolate ligase from Maricaulis maris (strain MCS10) (Caulobacter maris).